The following is a 507-amino-acid chain: MALRRTSDSKVYLPPTPVSRVVRRMNMYTHRIYYYAGSSRLLTLGHPYFPIPKSGSTAEIPKVSAYQYRVFRVHLPDPNKFGLPDPQLYNPETERLVWACVGVEVGRGQPLGVGLSGHPLFNKLDDTENSHLATANADTDNRDNVCVDNKQTQLCIIGCTPPLGEHWGVGTVCKNAQSQVQRGDCPPLELISSVIEDGDMIDTGFGAMDFTALQATKCDVPLDINQSICKYPDYLKMSADTYGNSMFFFLRREQLFARHFFNKAGTIGDSVPVSMYIKGAGQGREPPTTSIYSRTPSGSMVTSDAQLFNKPYWLQRAQGHNNGICWGNQLFVTCVDTTRSTNLTISTVSAQSASATFKPSDYKQFIRHGEEYELQFIFQLCKITLTTDVMAYIHTMNSTILENWNFGLTLPPTASLEDAYRFIKNSATTCQRDAPAQPKEDPFSKLKFWDVDLKEKFSIDLDQFPLGRKFMLQAGIQRRPKLGTKRPASSLSASSSSTTRKKRKLTK.

The interval 477-507 (QRRPKLGTKRPASSLSASSSSTTRKKRKLTK) is disordered. Over residues 488 to 498 (ASSLSASSSST) the composition is skewed to low complexity.

Belongs to the papillomaviridae L1 protein family. In terms of assembly, self-assembles into homopentamers. The capsid has an icosahedral symmetry and consists of 72 capsomers, with each capsomer being a pentamer of L1. Interacts with the minor capsid protein L2; this interaction is necessary for viral genome encapsidation. Interacts with protein E2; this interaction enhances E2-dependent replication and transcription activation.

It localises to the virion. The protein localises to the host nucleus. Its function is as follows. Forms an icosahedral capsid with a T=7 symmetry and a 50 nm diameter. The capsid is composed of 72 pentamers linked to each other by disulfide bonds and associated with L2 proteins. Binds to heparan sulfate proteoglycans on cell surface of basal layer keratinocytes to provide initial virion attachment. This binding mediates a conformational change in the virus capsid that facilitates efficient infection. The virion enters the host cell via endocytosis. During virus trafficking, L1 protein dissociates from the viral DNA and the genomic DNA is released to the host nucleus. The virion assembly takes place within the cell nucleus. Encapsulates the genomic DNA together with protein L2. The chain is Major capsid protein L1 from Homo sapiens (Human).